A 296-amino-acid polypeptide reads, in one-letter code: Protoheme IX farnesyltransferase (296 aa).

9 consecutive transmembrane segments (helical) span residues 14 to 34 (IIFGNLISVVGGFLLASKGVI), 36 to 56 (YPLFLATLFGVSLVVASGCVF), 75 to 95 (VLVKGLIDPKVSLIYASILGI), 99 to 119 (LLLYVGANPLAMWLAVIGFVI), 133 to 153 (VYGTLIGSLSGAAPPVIGYCA), 163 to 183 (LILLLIFSLWQMPHSYAIAIF), 209 to 229 (ITLYILAFMVATLMLTLSGYA), 234 to 254 (LVVAAAVSVWWLGMALRGYKA), and 265 to 285 (FVFSIIAITSLSVMMSVDFNV).

Belongs to the UbiA prenyltransferase family. Protoheme IX farnesyltransferase subfamily.

It localises to the cell inner membrane. The catalysed reaction is heme b + (2E,6E)-farnesyl diphosphate + H2O = Fe(II)-heme o + diphosphate. Its pathway is porphyrin-containing compound metabolism; heme O biosynthesis; heme O from protoheme: step 1/1. Converts heme B (protoheme IX) to heme O by substitution of the vinyl group on carbon 2 of heme B porphyrin ring with a hydroxyethyl farnesyl side group. This Yersinia enterocolitica serotype O:8 / biotype 1B (strain NCTC 13174 / 8081) protein is Protoheme IX farnesyltransferase.